We begin with the raw amino-acid sequence, 614 residues long: Serine/threonine-protein kinase-like protein E (614 aa).

The Protein kinase domain maps to 15–404 (YLIQLHLGQN…NPNTNGAPLS (390 aa)). 21 to 29 (LGQNSLGQQ) provides a ligand contact to ATP. Residues 256 to 269 (PEQTDNGVGKSSTG) are compositionally biased toward polar residues. The interval 256–284 (PEQTDNGVGKSSTGEPPFPTVHQSPESSS) is disordered.

Belongs to the protein kinase superfamily. Ser/Thr protein kinase family.

Lacks protein kinase activity. This chain is Serine/threonine-protein kinase-like protein E (spkE), found in Synechocystis sp. (strain ATCC 27184 / PCC 6803 / Kazusa).